We begin with the raw amino-acid sequence, 599 residues long: MTASSWELLALYLGALLLAAWPLGIWLARISSGRLPGWMQRVEAPLLRLAGTSADQAMNWWQYALALLAFNALGLLAVYALQRLQAVLPLNPAGMAAISPDSAFNTAISFVSNTNWQGYGGEASMSYLTQMLALAVQNFLSAATGIAVVFALFRGFAARATGAIGNFWVDVTRITAWLLLPLSLVFALFLAGNGVIQNFDAYKDVATLEATSYQQPKTGLDGQPLKDAQGAAVMENVRTDKQTLAMGPVASQEAIKMLGTNGGGFFNANSAHPYENPNALTNFFQMLAIFLIPAALCFAFGREVGDLRQGWAVLAAMTVMFVIAVVAITPAEQAGNPLLTPLGVDQAASALQAGGNMEGKETRFGINASSLFAVITTAASCGAVIAMHDSFTPLGGMVPMVMMQLGEVVFGGTGTGLYGMLIFAILAVFISGLMIGRTPEYLGKKIESHEMKLTSIAILVTPILVLAGTAVAVLAGAGRAGVANPGAHGFSEILYALSSAGNNNGSAFAGLSANTPFYNTLLGLAMWLGRFGVIVPVLAIAGSLAAKKRLPVTPGTMPTHGPLFVLLLIGTVLLVGLLNYVPALALGPVVEHLMLWPAH.

Helical transmembrane passes span 8 to 28 (LLAL…IWLA), 61 to 81 (WQYA…VYAL), 133 to 153 (ALAV…FALF), 176 to 196 (AWLL…NGVI), 280 to 300 (LTNF…CFAF), 311 to 331 (WAVL…ITPA), 366 to 386 (INAS…AVIA), 391 to 411 (FTPL…VVFG), 416 to 436 (GLYG…LMIG), 456 to 476 (IAIL…VLAG), 521 to 541 (LLGL…LAIA), and 563 to 583 (LFVL…YVPA).

The protein belongs to the KdpA family. In terms of assembly, the system is composed of three essential subunits: KdpA, KdpB and KdpC.

The protein localises to the cell inner membrane. Functionally, part of the high-affinity ATP-driven potassium transport (or Kdp) system, which catalyzes the hydrolysis of ATP coupled with the electrogenic transport of potassium into the cytoplasm. This subunit binds the periplasmic potassium ions and delivers the ions to the membrane domain of KdpB through an intramembrane tunnel. In Polaromonas naphthalenivorans (strain CJ2), this protein is Potassium-transporting ATPase potassium-binding subunit.